The chain runs to 406 residues: Tryptophan 2,3-dioxygenase (406 aa).

S19 is modified (phosphoserine). Residues 72-76 (FIITH) and R144 contribute to the substrate site. Heme is bound at residue H328. Substrate is bound at residue T342.

The protein belongs to the tryptophan 2,3-dioxygenase family. As to quaternary structure, homotetramer. Dimer of dimers. Heme is required as a cofactor.

It carries out the reaction L-tryptophan + O2 = N-formyl-L-kynurenine. Its pathway is amino-acid degradation; L-tryptophan degradation via kynurenine pathway; L-kynurenine from L-tryptophan: step 1/2. Its function is as follows. Heme-dependent dioxygenase that catalyzes the oxidative cleavage of the L-tryptophan (L-Trp) pyrrole ring and converts L-tryptophan to N-formyl-L-kynurenine. Catalyzes the oxidative cleavage of the indole moiety. The sequence is that of Tryptophan 2,3-dioxygenase from Mus musculus (Mouse).